The sequence spans 323 residues: Lipoyl synthase (323 aa).

The span at 1 to 14 (MVTILDRTKPDDKR) shows a compositional bias: basic and acidic residues. The tract at residues 1-25 (MVTILDRTKPDDKRIRHPEKAHKPD) is disordered. Residues Cys61, Cys66, Cys72, Cys87, Cys91, Cys94, and Ser300 each coordinate [4Fe-4S] cluster. Positions 73–289 (WEKKHATFMI…EDIAYTKGFL (217 aa)) constitute a Radical SAM core domain.

The protein belongs to the radical SAM superfamily. Lipoyl synthase family. It depends on [4Fe-4S] cluster as a cofactor.

The protein resides in the cytoplasm. The catalysed reaction is [[Fe-S] cluster scaffold protein carrying a second [4Fe-4S](2+) cluster] + N(6)-octanoyl-L-lysyl-[protein] + 2 oxidized [2Fe-2S]-[ferredoxin] + 2 S-adenosyl-L-methionine + 4 H(+) = [[Fe-S] cluster scaffold protein] + N(6)-[(R)-dihydrolipoyl]-L-lysyl-[protein] + 4 Fe(3+) + 2 hydrogen sulfide + 2 5'-deoxyadenosine + 2 L-methionine + 2 reduced [2Fe-2S]-[ferredoxin]. Its pathway is protein modification; protein lipoylation via endogenous pathway; protein N(6)-(lipoyl)lysine from octanoyl-[acyl-carrier-protein]: step 2/2. Its function is as follows. Catalyzes the radical-mediated insertion of two sulfur atoms into the C-6 and C-8 positions of the octanoyl moiety bound to the lipoyl domains of lipoate-dependent enzymes, thereby converting the octanoylated domains into lipoylated derivatives. This chain is Lipoyl synthase, found in Allorhizobium ampelinum (strain ATCC BAA-846 / DSM 112012 / S4) (Agrobacterium vitis (strain S4)).